The primary structure comprises 178 residues: N-alpha-acetyltransferase 20 (178 aa).

Residues 2–157 (TTLRAFTCDD…DAYDMRKALS (156 aa)) form the N-acetyltransferase domain. The interval 159-178 (DTEKKSIVPLPHPVRPEDIE) is disordered.

This sequence belongs to the acetyltransferase family. ARD1 subfamily. As to quaternary structure, component of the N-terminal acetyltransferase B (NatB) complex which is composed of naa20 and naa25.

Its subcellular location is the cytoplasm. It localises to the nucleus. It catalyses the reaction N-terminal L-methionyl-L-asparaginyl-[protein] + acetyl-CoA = N-terminal N(alpha)-acetyl-L-methionyl-L-asparaginyl-[protein] + CoA + H(+). It carries out the reaction N-terminal L-methionyl-L-glutaminyl-[protein] + acetyl-CoA = N-terminal N(alpha)-acetyl-L-methionyl-L-glutaminyl-[protein] + CoA + H(+). The enzyme catalyses N-terminal L-methionyl-L-aspartyl-[protein] + acetyl-CoA = N-terminal N(alpha)-acetyl-L-methionyl-L-aspartyl-[protein] + CoA + H(+). The catalysed reaction is N-terminal L-methionyl-L-glutamyl-[protein] + acetyl-CoA = N-terminal N(alpha)-acetyl-L-methionyl-L-glutamyl-[protein] + CoA + H(+). Functionally, catalytic subunit of the NatB complex which catalyzes acetylation of the N-terminal methionine residues of peptides beginning with Met-Asp, Met-Glu, Met-Asn and Met-Gln. Proteins with cell cycle functions are overrepresented in the pool of NatB substrates. Required for maintaining the structure and function of actomyosin fibers and for proper cellular migration. The protein is N-alpha-acetyltransferase 20 (naa20) of Xenopus laevis (African clawed frog).